We begin with the raw amino-acid sequence, 82 residues long: Mu-conotoxin MrVIB (82 aa).

A signal peptide spans 1-22; the sequence is MKLTCMMIVAVLFLTAWTLVMA. Positions 23-49 are excised as a propeptide; it reads DDSNNGLANHFLKSRDEMEDPEASKLE. 3 disulfides stabilise this stretch: cysteine 53–cysteine 71, cysteine 60–cysteine 76, and cysteine 70–cysteine 81.

Belongs to the conotoxin O1 superfamily. In terms of tissue distribution, expressed by the venom duct.

It is found in the secreted. MuO-conotoxins are gating-modifier toxins that inhibit sodium current by trapping the domain II voltage sensor in the closed position to prevent opening of the sodium channel. This toxin has a preference for Nav1.4/SCN4A over Nav1.2/SCN2A sodium channels. It blocks Nav channels by interacting mainly with the C-terminal part of the pore loop of domain-3. It also blocks fast-inactivating calcium current. Blocks Nav1.8/SCN10A sodium channels and has potent and long-lasting local anesthetic effects. It can also block propagation of action potentials in A- and C-fibers in sciatic nerve as well as skeletal muscle in isolated preparations. This is Mu-conotoxin MrVIB from Conus marmoreus (Marble cone).